Here is a 67-residue protein sequence, read N- to C-terminus: Large ribosomal subunit protein bL35 (67 aa).

A compositionally biased stretch (basic residues) spans 1–16 (MPKMKTKSSAKKRFRV). Residues 1 to 23 (MPKMKTKSSAKKRFRVRPGGTVK) form a disordered region.

It belongs to the bacterial ribosomal protein bL35 family.

The chain is Large ribosomal subunit protein bL35 from Variovorax paradoxus (strain S110).